Reading from the N-terminus, the 1227-residue chain is DNA-directed RNA polymerase subunit beta' (1227 aa).

The Zn(2+) site is built by cysteine 60, cysteine 62, cysteine 75, and cysteine 78. Positions 449, 451, and 453 each coordinate Mg(2+). Residues cysteine 847, cysteine 921, cysteine 928, and cysteine 931 each contribute to the Zn(2+) site.

This sequence belongs to the RNA polymerase beta' chain family. In terms of assembly, the RNAP catalytic core consists of 2 alpha, 1 beta, 1 beta' and 1 omega subunit. When a sigma factor is associated with the core the holoenzyme is formed, which can initiate transcription. It depends on Mg(2+) as a cofactor. Requires Zn(2+) as cofactor.

The enzyme catalyses RNA(n) + a ribonucleoside 5'-triphosphate = RNA(n+1) + diphosphate. DNA-dependent RNA polymerase catalyzes the transcription of DNA into RNA using the four ribonucleoside triphosphates as substrates. This is DNA-directed RNA polymerase subunit beta' from Lysinibacillus sphaericus (strain C3-41).